The chain runs to 865 residues: Protein fluG (865 aa).

The GS beta-grasp domain occupies proline 442–glycine 533. The GS catalytic domain occupies proline 540–tyrosine 865.

Belongs to the glutamine synthetase family.

The protein resides in the cytoplasm. Functionally, may function as a GSI-related enzyme in synthesizing a small diffusible factor that acts as an extracellular signal directing asexual sporulation and perhaps other aspects of colony growth. May be involved in brlA activation (an early transcriptional regulator for conidiation specific gene). This is Protein fluG (fluG) from Emericella nidulans (strain FGSC A4 / ATCC 38163 / CBS 112.46 / NRRL 194 / M139) (Aspergillus nidulans).